The primary structure comprises 435 residues: 5-methylthioadenosine/S-adenosylhomocysteine deaminase (435 aa).

Residues His-65 and His-67 each coordinate Zn(2+). The substrate site is built by Glu-94, Arg-150, and His-189. His-216 is a Zn(2+) binding site. Substrate contacts are provided by Glu-219 and Asp-304. Position 304 (Asp-304) interacts with Zn(2+).

Belongs to the metallo-dependent hydrolases superfamily. MTA/SAH deaminase family. The cofactor is Zn(2+).

The enzyme catalyses S-adenosyl-L-homocysteine + H2O + H(+) = S-inosyl-L-homocysteine + NH4(+). The catalysed reaction is S-methyl-5'-thioadenosine + H2O + H(+) = S-methyl-5'-thioinosine + NH4(+). In terms of biological role, catalyzes the deamination of 5-methylthioadenosine and S-adenosyl-L-homocysteine into 5-methylthioinosine and S-inosyl-L-homocysteine, respectively. Is also able to deaminate adenosine. The polypeptide is 5-methylthioadenosine/S-adenosylhomocysteine deaminase (Bacillus thuringiensis (strain Al Hakam)).